Here is a 315-residue protein sequence, read N- to C-terminus: Tetraacyldisaccharide 4'-kinase (315 aa).

An ATP-binding site is contributed by 45–52 (SVGGSGKT).

The protein belongs to the LpxK family.

The catalysed reaction is a lipid A disaccharide + ATP = a lipid IVA + ADP + H(+). It functions in the pathway glycolipid biosynthesis; lipid IV(A) biosynthesis; lipid IV(A) from (3R)-3-hydroxytetradecanoyl-[acyl-carrier-protein] and UDP-N-acetyl-alpha-D-glucosamine: step 6/6. Transfers the gamma-phosphate of ATP to the 4'-position of a tetraacyldisaccharide 1-phosphate intermediate (termed DS-1-P) to form tetraacyldisaccharide 1,4'-bis-phosphate (lipid IVA). This is Tetraacyldisaccharide 4'-kinase from Aquifex aeolicus (strain VF5).